An 86-amino-acid polypeptide reads, in one-letter code: MDAFDVIKAPVVTEKTVRMIEEENKLVFYVDRRATKQDIKRAMKELFDVEVEKVNTLITPKGEKKAYVKLKEGYDASKIAASLGIY.

The protein belongs to the universal ribosomal protein uL23 family. Part of the 50S ribosomal subunit. Contacts protein L29.

Binds to 23S rRNA. One of the proteins that surrounds the polypeptide exit tunnel on the outside of the ribosome. This Methanocaldococcus jannaschii (strain ATCC 43067 / DSM 2661 / JAL-1 / JCM 10045 / NBRC 100440) (Methanococcus jannaschii) protein is Large ribosomal subunit protein uL23.